The chain runs to 580 residues: WD repeat-containing protein 46 (580 aa).

The segment at 34 to 108 (SWKEYKKMKQ…QQEKMKVTKD (75 aa)) is disordered. Basic and acidic residues-rich tracts occupy residues 64-85 (TEGRAKKPKVLTKEQLERHDTG) and 98-108 (LQQEKMKVTKD). WD repeat units follow at residues 193-234 (AALD…YTYV), 235-272 (YDNLGTELHCLKTMYDTARLEFLPHHFLLVGSSRNSFL), 274-312 (YVDVSVGKQVASFATKSGTLDVMCQNPANAIIHTGHTNG), 315-354 (SLWSPNSKEPLVKILTHLSAVKGIAVDDQGNYMATTGLDR), 357-396 (RIWDVRMFRQLHAYSLPFGVSNVAISQKMNVACAVGNHVQ), and 399-436 (RGMHNGTCKEPYLVHNCGGVVTDLRFVPWEDVLGIGHA).

As to quaternary structure, part of the small subunit (SSU) processome.

The protein localises to the nucleus. It localises to the nucleolus. In terms of biological role, scaffold component of the nucleolar structure. Part of the small subunit (SSU) processome, first precursor of the small eukaryotic ribosomal subunit. Required for 18S rRNA processing. Plays a role in negative regulation of detoxification genes by inhibiting protein levels of transcription factor skn-1, leading to down-regulation of skn-1 target genes. In Caenorhabditis elegans, this protein is WD repeat-containing protein 46.